Reading from the N-terminus, the 409-residue chain is Microfibrillar-associated protein 3-like (409 aa).

Residues 1 to 28 (MDRLKSHLTVCFLPSVPFLILVSTLATA) form the signal peptide. The Extracellular segment spans residues 29 to 149 (KSVTNSTLNG…LRVIFTSGDM (121 aa)). N-linked (GlcNAc...) asparagine glycosylation is found at Asn-33, Asn-37, Asn-67, Asn-111, and Asn-135. The region spanning 47-141 (PVIIARTDHI…GTVNNTVTLR (95 aa)) is the Ig-like C2-type domain. Cys-68 and Cys-125 form a disulfide bridge. A helical membrane pass occupies residues 150 to 172 (GVYYMVVCLVAFTIVMVLNITRL). Residues 173 to 409 (CMMSSHLKKT…NTCIIYESHV (237 aa)) lie on the Cytoplasmic side of the membrane. Tyr-287 bears the Phosphotyrosine; by EGFR mark. 2 disordered regions span residues 292-311 (SLKR…LHEQ) and 320-385 (SVHP…VLPP). A phosphoserine mark is found at Ser-298, Ser-303, Ser-306, and Ser-307. Residues 339-355 (EVKDVEETELSAEHSPE) are compositionally biased toward basic and acidic residues. The span at 363-377 (VTSTELTSEEPTPVE) shows a compositional bias: low complexity.

Highly expressed in testis.

It localises to the cell membrane. The protein resides in the nucleus. Its subcellular location is the cytoplasm. In terms of biological role, may participate in the nuclear signaling of EGFR and MAPK1/ERK2. May a have a role in metastasis. The protein is Microfibrillar-associated protein 3-like (MFAP3L) of Homo sapiens (Human).